A 115-amino-acid polypeptide reads, in one-letter code: Salivary protein gSG6 (115 aa).

The signal sequence occupies residues 1–28 (MAIRVELLLAMVLLPLLLLESVVPHAAA).

In terms of tissue distribution, female saliva (at protein level). Distal-lateral lobes of female salivary gland (at protein level). Not detected in male salivary gland (at protein level).

It is found in the secreted. In terms of biological role, required for efficient probing and blood feeding. In Anopheles gambiae (African malaria mosquito), this protein is Salivary protein gSG6.